A 667-amino-acid chain; its full sequence is DNA ligase (667 aa).

Residues aspartate 34–aspartate 38, serine 83–leucine 84, and glutamate 112 contribute to the NAD(+) site. The active-site N6-AMP-lysine intermediate is lysine 114. NAD(+) contacts are provided by arginine 135, glutamate 169, lysine 285, and lysine 309. Zn(2+) is bound by residues cysteine 403, cysteine 406, cysteine 421, and cysteine 426. In terms of domain architecture, BRCT spans alanine 589–lysine 667.

Belongs to the NAD-dependent DNA ligase family. LigA subfamily. Requires Mg(2+) as cofactor. Mn(2+) is required as a cofactor.

It carries out the reaction NAD(+) + (deoxyribonucleotide)n-3'-hydroxyl + 5'-phospho-(deoxyribonucleotide)m = (deoxyribonucleotide)n+m + AMP + beta-nicotinamide D-nucleotide.. DNA ligase that catalyzes the formation of phosphodiester linkages between 5'-phosphoryl and 3'-hydroxyl groups in double-stranded DNA using NAD as a coenzyme and as the energy source for the reaction. It is essential for DNA replication and repair of damaged DNA. The polypeptide is DNA ligase (Bacillus licheniformis (strain ATCC 14580 / DSM 13 / JCM 2505 / CCUG 7422 / NBRC 12200 / NCIMB 9375 / NCTC 10341 / NRRL NRS-1264 / Gibson 46)).